The chain runs to 141 residues: UPF0310 protein SGO_1818 (141 aa).

This sequence belongs to the UPF0310 family.

The chain is UPF0310 protein SGO_1818 from Streptococcus gordonii (strain Challis / ATCC 35105 / BCRC 15272 / CH1 / DL1 / V288).